The following is a 369-amino-acid chain: Probable dual-specificity RNA methyltransferase RlmN (369 aa).

Glutamate 108 functions as the Proton acceptor in the catalytic mechanism. Positions 114–352 (YPDRATLCIS…CTVRDTKGQE (239 aa)) constitute a Radical SAM core domain. Cysteine 121 and cysteine 357 form a disulfide bridge. The [4Fe-4S] cluster site is built by cysteine 128, cysteine 132, and cysteine 135. S-adenosyl-L-methionine-binding positions include 178-179 (GE), serine 212, 235-237 (SLH), and asparagine 314. Cysteine 357 (S-methylcysteine intermediate) is an active-site residue.

Belongs to the radical SAM superfamily. RlmN family. The cofactor is [4Fe-4S] cluster.

The protein resides in the cytoplasm. The catalysed reaction is adenosine(2503) in 23S rRNA + 2 reduced [2Fe-2S]-[ferredoxin] + 2 S-adenosyl-L-methionine = 2-methyladenosine(2503) in 23S rRNA + 5'-deoxyadenosine + L-methionine + 2 oxidized [2Fe-2S]-[ferredoxin] + S-adenosyl-L-homocysteine. The enzyme catalyses adenosine(37) in tRNA + 2 reduced [2Fe-2S]-[ferredoxin] + 2 S-adenosyl-L-methionine = 2-methyladenosine(37) in tRNA + 5'-deoxyadenosine + L-methionine + 2 oxidized [2Fe-2S]-[ferredoxin] + S-adenosyl-L-homocysteine. In terms of biological role, specifically methylates position 2 of adenine 2503 in 23S rRNA and position 2 of adenine 37 in tRNAs. This Corynebacterium efficiens (strain DSM 44549 / YS-314 / AJ 12310 / JCM 11189 / NBRC 100395) protein is Probable dual-specificity RNA methyltransferase RlmN.